A 351-amino-acid chain; its full sequence is N6-Methyl-AMP deaminase (351 aa).

Positions 23 and 25 each coordinate Zn(2+). N(6)-methyl-AMP contacts are provided by residues His-25, Asn-27, His-73, 105–108 (STPR), Asp-147, and Gly-180. His-207 contributes to the Zn(2+) binding site. Glu-210, Asp-292, and Asp-293 together coordinate N(6)-methyl-AMP. The active-site Proton donor is Glu-210. Zn(2+) is bound at residue Asp-292.

This sequence belongs to the metallo-dependent hydrolases superfamily. Adenosine and AMP deaminases family. Monomer. Zn(2+) is required as a cofactor.

The enzyme catalyses N(6)-methyl-AMP + H2O + H(+) = IMP + methylamine. Its function is as follows. Catalyzes the hydrolysis of the free cytosolic methylated adenosine nucleotide N(6)-methyl-AMP (N6-mAMP) to produce inositol monophosphate (IMP) and methylamine. Is required for the catabolism of cytosolic N6-mAMP, which is derived from the degradation of mRNA containing N6-methylated adenine (m6A). In Bos taurus (Bovine), this protein is N6-Methyl-AMP deaminase.